The following is a 729-amino-acid chain: Beta-galactosidase 4 (729 aa).

The signal sequence occupies residues 1-35; sequence MAPAPTPAAAAGRRVAVLAAALVAASLAASVGVAN. Glutamate 194 acts as the Proton donor in catalysis. Glutamate 263 serves as the catalytic Nucleophile.

The protein belongs to the glycosyl hydrolase 35 family.

The protein localises to the secreted. It is found in the extracellular space. It localises to the apoplast. The enzyme catalyses Hydrolysis of terminal non-reducing beta-D-galactose residues in beta-D-galactosides.. This is Beta-galactosidase 4 from Oryza sativa subsp. japonica (Rice).